The sequence spans 235 residues: Eukaryotic translation initiation factor 4E-1 (235 aa).

The segment at Met-1–Ser-52 is disordered. Residues Glu-13–Pro-24 show a composition bias toward polar residues. The span at Asp-30–Asp-47 shows a compositional bias: acidic residues. EIF4G-binding stretches follow at residues His-60 to Glu-63 and Phe-70 to His-106. MRNA is bound by residues Lys-78–Gly-83, Lys-110, and Trp-128–Glu-129. A disulfide bond links Cys-133 and Cys-171. Residues Tyr-154–Gln-163 form an EIF4G-binding region. Residues Arg-178–Lys-183 and Lys-223–Arg-227 contribute to the mRNA site.

Belongs to the eukaryotic initiation factor 4E family. As to quaternary structure, EIF4F is a multi-subunit complex, the composition of which varies with external and internal environmental conditions. It is composed of at least EIF4A, EIF4E and EIF4G. EIF4E is also known to interact with other partners. Interacts directly with eIF4G. In higher plants two isoforms of EIF4F have been identified, named isoform EIF4F and isoform EIF(iso)4F. Isoform EIF4F has subunits p220 and p26, whereas isoform EIF(iso)4F has subunits p82 and p28. (Microbial infection) Interacts with potyvirus viral genome-linked protein (VPg); this interaction is possible in susceptible hosts but impaired in resistant plants. Post-translationally, according to the redox status, the Cys-133-Cys-171 disulfide bridge may have a role in regulating protein function by affecting its ability to bind capped mRNA.

It localises to the nucleus. The protein localises to the cytoplasm. Component of the protein complex eIF4F, which is involved in the recognition of the mRNA cap, ATP-dependent unwinding of 5'-terminal secondary structure and recruitment of mRNA to the ribosome. Recognizes and binds the 7-methylguanosine-containing mRNA cap during an early step in the initiation of protein synthesis and facilitates ribosome binding by inducing the unwinding of the mRNAs secondary structures. Key component of recessive resistance to potyviruses and Tombusviridae genus Carmovirus such as melon necrotic spot virus (MNSV). Functionally, (Microbial infection) Susceptibility host factor required for viral infection by recruiting viral RNAs, including uncapped and non-polyadenylated RNA, to the host ribosomal complex via an interaction with viral genome-linked protein (VPg). The chain is Eukaryotic translation initiation factor 4E-1 from Cucumis melo (Muskmelon).